A 748-amino-acid polypeptide reads, in one-letter code: Catalase-peroxidase (748 aa).

A cross-link (tryptophyl-tyrosyl-methioninium (Trp-Tyr) (with M-268)) is located at residues 91-242 (WHSAGTYRIG…LAAVQMGLIY (152 aa)). The active-site Proton acceptor is His-92. The segment at 194–223 (DRYGKGKGSSSQGEIPADAHRHGQEQARTA) is disordered. A cross-link (tryptophyl-tyrosyl-methioninium (Tyr-Met) (with W-91)) is located at residues 242-268 (YVNPEGPEGNPDPLAAAHDIRETFARM). His-283 serves as a coordination point for heme b. The interval 288–310 (THGAGDAKHVGREPEGEDMDSQG) is disordered. Residues 290 to 301 (GAGDAKHVGREP) are compositionally biased toward basic and acidic residues.

This sequence belongs to the peroxidase family. Peroxidase/catalase subfamily. In terms of assembly, homodimer or homotetramer. Heme b serves as cofactor. In terms of processing, formation of the three residue Trp-Tyr-Met cross-link is important for the catalase, but not the peroxidase activity of the enzyme.

It catalyses the reaction H2O2 + AH2 = A + 2 H2O. The catalysed reaction is 2 H2O2 = O2 + 2 H2O. Functionally, bifunctional enzyme with both catalase and broad-spectrum peroxidase activity. The sequence is that of Catalase-peroxidase from Herbaspirillum seropedicae.